Here is a 464-residue protein sequence, read N- to C-terminus: Fumarate hydratase class II (464 aa).

Substrate-binding positions include 98–100 (SGT), 129–132 (HPND), 139–141 (SSN), and Thr187. His188 serves as the catalytic Proton donor/acceptor. Ser318 is an active-site residue. Substrate-binding positions include Ser319 and 324-326 (KVN).

It belongs to the class-II fumarase/aspartase family. Fumarase subfamily. In terms of assembly, homotetramer.

Its subcellular location is the cytoplasm. The catalysed reaction is (S)-malate = fumarate + H2O. It participates in carbohydrate metabolism; tricarboxylic acid cycle; (S)-malate from fumarate: step 1/1. In terms of biological role, involved in the TCA cycle. Catalyzes the stereospecific interconversion of fumarate to L-malate. This chain is Fumarate hydratase class II, found in Haemophilus influenzae (strain ATCC 51907 / DSM 11121 / KW20 / Rd).